Reading from the N-terminus, the 424-residue chain is 5-methylthioadenosine/S-adenosylhomocysteine deaminase (424 aa).

Residues histidine 60 and histidine 62 each coordinate Zn(2+). Substrate contacts are provided by glutamate 89 and histidine 181. Position 208 (histidine 208) interacts with Zn(2+). Residues glutamate 211 and aspartate 296 each coordinate substrate. Residue aspartate 296 coordinates Zn(2+).

This sequence belongs to the metallo-dependent hydrolases superfamily. MTA/SAH deaminase family. The cofactor is Zn(2+).

It catalyses the reaction S-adenosyl-L-homocysteine + H2O + H(+) = S-inosyl-L-homocysteine + NH4(+). It carries out the reaction S-methyl-5'-thioadenosine + H2O + H(+) = S-methyl-5'-thioinosine + NH4(+). In terms of biological role, catalyzes the deamination of 5-methylthioadenosine and S-adenosyl-L-homocysteine into 5-methylthioinosine and S-inosyl-L-homocysteine, respectively. Is also able to deaminate adenosine. In Thermococcus sibiricus (strain DSM 12597 / MM 739), this protein is 5-methylthioadenosine/S-adenosylhomocysteine deaminase.